The following is a 363-amino-acid chain: Dihydroorotate dehydrogenase (quinone) (363 aa).

FMN contacts are provided by residues 62–66 (AGFDK) and Thr-86. Residue Lys-66 coordinates substrate. Residue 111–115 (NRMGF) coordinates substrate. The FMN site is built by Asn-142 and Asn-175. Asn-175 is a binding site for substrate. Ser-178 acts as the Nucleophile in catalysis. Residue Asn-180 participates in substrate binding. FMN-binding residues include Lys-216 and Thr-244. Position 245–246 (245–246 (NT)) interacts with substrate. FMN contacts are provided by residues Gly-267, Gly-296, and 317-318 (YT).

The protein belongs to the dihydroorotate dehydrogenase family. Type 2 subfamily. Monomer. FMN is required as a cofactor.

The protein localises to the cell membrane. The enzyme catalyses (S)-dihydroorotate + a quinone = orotate + a quinol. The protein operates within pyrimidine metabolism; UMP biosynthesis via de novo pathway; orotate from (S)-dihydroorotate (quinone route): step 1/1. In terms of biological role, catalyzes the conversion of dihydroorotate to orotate with quinone as electron acceptor. This chain is Dihydroorotate dehydrogenase (quinone), found in Anaeromyxobacter sp. (strain Fw109-5).